A 379-amino-acid chain; its full sequence is 8-amino-7-oxononanoate synthase (379 aa).

The substrate site is built by Arg-27 and Arg-34. 114-115 (GY) contacts pyridoxal 5'-phosphate. His-139 contacts substrate. Residues Ser-187, 212-215 (DDAH), and 232-235 (TLSK) each bind pyridoxal 5'-phosphate. Lys-235 is subject to N6-(pyridoxal phosphate)lysine. Thr-344 provides a ligand contact to substrate.

It belongs to the class-II pyridoxal-phosphate-dependent aminotransferase family. BioF subfamily. Homodimer. Pyridoxal 5'-phosphate serves as cofactor.

The catalysed reaction is 6-carboxyhexanoyl-[ACP] + L-alanine + H(+) = (8S)-8-amino-7-oxononanoate + holo-[ACP] + CO2. The protein operates within cofactor biosynthesis; biotin biosynthesis. In terms of biological role, catalyzes the decarboxylative condensation of pimeloyl-[acyl-carrier protein] and L-alanine to produce 8-amino-7-oxononanoate (AON), [acyl-carrier protein], and carbon dioxide. The polypeptide is 8-amino-7-oxononanoate synthase (Methylobacterium nodulans (strain LMG 21967 / CNCM I-2342 / ORS 2060)).